The sequence spans 1164 residues: MKKNTDSEMDQRLGYKFLVPDPKAGVFYRPLHFQYVSYSNFILHRLHEILTVKRPLLSFKNNTERIMIEISNVKVTPPDYSPIIASIKGKSYDALATFTVNIFKEVMTKEGISITKISSYEGKDSHLIKIPLLIGYGNKNPLDTAKYLVPNVIGGVFINKQSVEKVGINLVEKITTWPKFRVVKPNSFTFSFSSVSPPNVLPTRYRHYKISLDISQLEALNISSTKTFITVNIVLLSQYLSRVSLEFIRRSLSYDMPPEVVYLVNAIIDSAKRITESITDFNIDTYINDLVEAEHIKQKSQLTINEFKYEMLHNFLPHMNYTPDQLKGFYMISLLRKFLYCIYHTSRYPDRDSMVCHRILTYGKYFETLAHDELENYIGNIRNDIMNNHKNRGTYAVNIHVLTTPGLNHAFSSLLSGKFKKSDGSYRTHPHYSWMQNISIPRSVGFYPDQVKISKMFSVRKYHPSQYLYFCSSDVPERGPQVGLVSQLSVLSSITNILTSEYLDLEKKICEYIRSYYKDDISYFETGFPITIENALVASLNPNMICDFVTDFRRRKRMGFFGNLEVGITLVRDHMNEIRINIGAGRLVRPFLVVDNGELMMDACPELESRLDDMTFSDIQKEFPHVIEMVDIEQFTFSNVCESVQKFRMMSKDERKQYDLCDFPAEFRDGYVASSLVGINHNSGPRAILGCAQAKQAISCLSSDIRNKIDNGIHLMYPERPIVISKALETSKIAANCFGQHVTIALMSYKGINQEDGIIIKKQFIQRGGLDIVTAKKHQVEIPLENFNNKERDRSNAYSKLESNGLVRLNAFLESGDAIARNISSRTLEDDFARDNQISFDVPEKYTDMYKSRVERVQVELTDKVKVRVLTMKERRPILGDKFTTRTSQKGTVAYVADETELPYDENGITPDVIINSTSIFSRKTISMLIEVILTAAYSAKPYNNKGENRPVCFPSSNETSIDTYMQFAKQCYEHSNPKLSDEELSDKIFCEKILYDPETDKPYASKVFFGPIYYLRLRHLTQDKATVRCRGKKTKLIRQANEGRKRGGGIKFGEMERDCLIAHGAANTITEVLKDSEEDYQDVYVCENCGDIAAQIKGINTCLRCSKLNLSPLLTKIDTTHVSKVFLTQMNARGVKVKLDFERRPPSFYKPLDKVDLKPSFLV.

Belongs to the RNA polymerase beta chain family. In terms of assembly, the DNA-dependent RNA polymerase used for intermediate and late genes expression consists of eight subunits 147 kDa, 133 kDa, 35 kDa, 30 kDa, 22 kDa, 19 kDa, 18 kDa and 7 kDa totalling more than 500 kDa in mass. The same holoenzyme, with the addition of the transcription-specificity factor RAP94, is used for early gene expression.

It localises to the virion. The catalysed reaction is RNA(n) + a ribonucleoside 5'-triphosphate = RNA(n+1) + diphosphate. Part of the DNA-dependent RNA polymerase which catalyzes the transcription of viral DNA into RNA using the four ribonucleoside triphosphates as substrates. Responsible for the transcription of early, intermediate and late genes. DNA-dependent RNA polymerase associates with the early transcription factor (ETF), itself composed of D6 and A7, thereby allowing the early genes transcription. Late transcription, and probably also intermediate transcription, require newly synthesized RNA polymerase. The chain is DNA-directed RNA polymerase 133 kDa polypeptide (RPO132) from Homo sapiens (Human).